Here is a 305-residue protein sequence, read N- to C-terminus: ATP synthase gamma chain (305 aa).

It belongs to the ATPase gamma chain family. F-type ATPases have 2 components, CF(1) - the catalytic core - and CF(0) - the membrane proton channel. CF(1) has five subunits: alpha(3), beta(3), gamma(1), delta(1), epsilon(1). CF(0) has three main subunits: a, b and c.

It is found in the cell membrane. In terms of biological role, produces ATP from ADP in the presence of a proton gradient across the membrane. The gamma chain is believed to be important in regulating ATPase activity and the flow of protons through the CF(0) complex. This Streptomyces griseus subsp. griseus (strain JCM 4626 / CBS 651.72 / NBRC 13350 / KCC S-0626 / ISP 5235) protein is ATP synthase gamma chain.